Reading from the N-terminus, the 168-residue chain is Large ribosomal subunit protein uL24 (168 aa).

A disordered region spans residues 112-168; sequence LEGKDPRKQPKEAPKAAEKPAKEEPKKETPKAEEKPAKEEPKETKVEKKSEEKEDEN.

It belongs to the universal ribosomal protein uL24 family. In terms of assembly, part of the 50S ribosomal subunit.

Its function is as follows. One of two assembly initiator proteins, it binds directly to the 5'-end of the 23S rRNA, where it nucleates assembly of the 50S subunit. In terms of biological role, located at the polypeptide exit tunnel on the outside of the subunit. The chain is Large ribosomal subunit protein uL24 from Nitrosopumilus maritimus (strain SCM1).